A 116-amino-acid chain; its full sequence is Ribonuclease P protein component (116 aa).

This sequence belongs to the RnpA family. Consists of a catalytic RNA component (M1 or rnpB) and a protein subunit.

The enzyme catalyses Endonucleolytic cleavage of RNA, removing 5'-extranucleotides from tRNA precursor.. In terms of biological role, RNaseP catalyzes the removal of the 5'-leader sequence from pre-tRNA to produce the mature 5'-terminus. It can also cleave other RNA substrates such as 4.5S RNA. The protein component plays an auxiliary but essential role in vivo by binding to the 5'-leader sequence and broadening the substrate specificity of the ribozyme. This chain is Ribonuclease P protein component, found in Mycobacterium bovis (strain ATCC BAA-935 / AF2122/97).